The following is a 461-amino-acid chain: MSFDTFYNIITGQPRSARETTSGVNPLDRSSLWPAPVATGNDVEEAVRSAQEAFPAWSEKTYKQRTELLEKFADLYLVHANEFCQLIATECGRTAGNAAIEVYVAAQWLRYPSKYEIPEEVTEDEKKTSIVTHEPLGVVAAICPWNFPLMLALGKIAPALATGNCVILKPSPFTPYSSLKLVELAQQVFPPSVLQVLHGHDDLGPMLVKHPRIQKITFTGSTTTGKQILRDAAETMKRVTLETAGNNASIILPDVNIEAVIPQLAGGLWFNAGQVCIATRRMYIHQDIFDEAVAQLAEASKDLASGMEPIQNEMQLVRLQQALSDANAAGCELLSLGKTEAAEGFFIQPTILKSPPPDADVVQQENFGPIVSCIKFSSLDEAISLANNSDTGLAASVWSSDVSAARRVAAKLEVGNVYINGPPQPDPYVPFGGHKQSGLGVEYGLPGLLSFCQTKSTYLYK.

220–225 serves as a coordination point for NAD(+); sequence GSTTTG. Catalysis depends on residues E242 and C276.

Belongs to the aldehyde dehydrogenase family.

The catalysed reaction is an aldehyde + NAD(+) + H2O = a carboxylate + NADH + 2 H(+). Its function is as follows. Putative aldehyde dehydrogenase; part of the gene cluster that mediates the biosynthesis of the mycotoxin fusarin C. Within the cluster, FUS1, FUS2, FUS8 and FUS9 are sufficient for fusarin production. The other FUS cluster members are not essential for fusarin C biosynthesis. The polypeptide is Putative aldehyde dehydrogenase FUS7 (Gibberella fujikuroi (strain CBS 195.34 / IMI 58289 / NRRL A-6831) (Bakanae and foot rot disease fungus)).